Here is a 501-residue protein sequence, read N- to C-terminus: Ribose import ATP-binding protein RbsA (501 aa).

ABC transporter domains follow at residues 5-241 and 252-495; these read LQLK…VGRK and APGE…VGKL. ATP is bound at residue 37–44; it reads GENGAGKS.

Belongs to the ABC transporter superfamily. Ribose importer (TC 3.A.1.2.1) family. As to quaternary structure, the complex is composed of an ATP-binding protein (RbsA), two transmembrane proteins (RbsC) and a solute-binding protein (RbsB).

It is found in the cell inner membrane. It carries out the reaction D-ribose(out) + ATP + H2O = D-ribose(in) + ADP + phosphate + H(+). Functionally, part of the ABC transporter complex RbsABC involved in ribose import. Responsible for energy coupling to the transport system. The chain is Ribose import ATP-binding protein RbsA from Salmonella typhimurium (strain LT2 / SGSC1412 / ATCC 700720).